Reading from the N-terminus, the 445-residue chain is tRNA modification GTPase MnmE (445 aa).

(6S)-5-formyl-5,6,7,8-tetrahydrofolate-binding residues include arginine 20, glutamate 79, and lysine 119. Residues 215–371 (GLKLAIIGPP…ILKNIENIAE (157 aa)) form the TrmE-type G domain. Asparagine 225 serves as a coordination point for K(+). GTP contacts are provided by residues 225-230 (NVGKSS), 244-250 (SNIAGTT), and 269-272 (DTAG). Serine 229 contacts Mg(2+). K(+) contacts are provided by serine 244, isoleucine 246, and threonine 249. Threonine 250 is a binding site for Mg(2+). Lysine 445 provides a ligand contact to (6S)-5-formyl-5,6,7,8-tetrahydrofolate.

Belongs to the TRAFAC class TrmE-Era-EngA-EngB-Septin-like GTPase superfamily. TrmE GTPase family. As to quaternary structure, homodimer. Heterotetramer of two MnmE and two MnmG subunits. K(+) serves as cofactor.

It is found in the cytoplasm. Functionally, exhibits a very high intrinsic GTPase hydrolysis rate. Involved in the addition of a carboxymethylaminomethyl (cmnm) group at the wobble position (U34) of certain tRNAs, forming tRNA-cmnm(5)s(2)U34. In Rickettsia rickettsii (strain Iowa), this protein is tRNA modification GTPase MnmE.